The following is a 449-amino-acid chain: Hyaluronidase (449 aa).

The signal sequence occupies residues M1–V23. Cystine bridges form between C47-C340 and C211-C227. N-linked (GlcNAc...) asparagine glycosylation is found at N67 and N103. The active-site Proton donor is E135. N153 carries an N-linked (GlcNAc...) asparagine glycan. A glycan (N-linked (GlcNAc...) asparagine) is linked at N357. Cystine bridges form between C365–C376, C370–C427, and C429–C438. N401 carries N-linked (GlcNAc...) asparagine glycosylation. Residues C427–C438 form the EGF-like domain.

The protein belongs to the glycosyl hydrolase 56 family. Monomer. Expressed by the venom gland.

The protein localises to the secreted. The enzyme catalyses Random hydrolysis of (1-&gt;4)-linkages between N-acetyl-beta-D-glucosamine and D-glucuronate residues in hyaluronate.. Snake venom endo-hyaluronidase that degrades hyaluronan to smaller oligosaccharide fragments. In venom, it is not toxic by itself, but increases the diffusion of other venom proteins by degrading the extracellular matrix. In addition, it displays antiedematogenic activity. This is Hyaluronidase from Echis ocellatus (Ocellated saw-scaled viper).